The following is a 317-amino-acid chain: MFTKILGTGSYLPAHIRSNADLEKMVDTSDEWIVTRTGIRERRIARADETVSSMGRDAAEQALTMAGIAVQKVGMIIVATTSSSHAFPSSACQIQRELGINDCIAFDLAAACAGFSYALSVADNYIKNGAVEYALVVGSDALSHTLDPEDRGTLILFGDGAGAAVLGRSAEPGIISTHLHADGHYGDLLTLPYHNRLDPAASAYLTMSGNEVFKVAVTELAHIVDETLSANGLDRSELDWLVPHQANLRIITATAKRLGMGMEKVVVTLDRHGNTSAASVPLALDEAVRDGRIQPGHLVLLEAFGGGFTWGSALLRF.

Catalysis depends on residues C112 and H244. Residues 245–249 form an ACP-binding region; the sequence is QANLR. N274 is a catalytic residue.

It belongs to the thiolase-like superfamily. FabH family. As to quaternary structure, homodimer.

It is found in the cytoplasm. It catalyses the reaction malonyl-[ACP] + acetyl-CoA + H(+) = 3-oxobutanoyl-[ACP] + CO2 + CoA. It participates in lipid metabolism; fatty acid biosynthesis. In terms of biological role, catalyzes the condensation reaction of fatty acid synthesis by the addition to an acyl acceptor of two carbons from malonyl-ACP. Catalyzes the first condensation reaction which initiates fatty acid synthesis and may therefore play a role in governing the total rate of fatty acid production. Possesses both acetoacetyl-ACP synthase and acetyl transacylase activities. Its substrate specificity determines the biosynthesis of branched-chain and/or straight-chain of fatty acids. The chain is Beta-ketoacyl-[acyl-carrier-protein] synthase III from Sodalis glossinidius (strain morsitans).